We begin with the raw amino-acid sequence, 209 residues long: uncharacterized protein (209 aa).

Residues 1-17 (MKRLVTGLLALSLFLAA) form the signal peptide. Residues 17-105 (ACGQDSDQQK…SNNQANNNQK (89 aa)) are disordered. Cys-18 is lipidated: N-palmitoyl cysteine. Residue Cys-18 is the site of S-diacylglycerol cysteine attachment. A compositionally biased stretch (basic and acidic residues) spans 23–70 (DQQKDGNKEKDDKAKTEQQDKKTNDSSKDKKDNKDDSKDVNKDNKDNS). Low complexity predominate over residues 71–105 (ANDNQQQSNSNATNNDQNQTNNNQSSNNQANNNQK).

Its subcellular location is the cell membrane. This is an uncharacterized protein from Staphylococcus aureus (strain COL).